The primary structure comprises 504 residues: Maturase K (504 aa).

The protein belongs to the intron maturase 2 family. MatK subfamily.

It localises to the plastid. The protein resides in the chloroplast. Its function is as follows. Usually encoded in the trnK tRNA gene intron. Probably assists in splicing its own and other chloroplast group II introns. The polypeptide is Maturase K (Quercus coccifera (Kermes oak)).